Consider the following 307-residue polypeptide: MSKHVAVLLGGTSAEREVSLNSGKACADALEGEGYRVTRVDVGPDIASVLTALRPDAAFNALHGPDGEDGTIQGLLEILKIPYTHSGVLASALAMNKERAKTVMRAAGVDVPEGRIVNRREAARTHPLPPPYVVKPIAEGSSVGVIIVRDGRSHPPQILASEEWTFGEQVLAEPYIAGRELTCGVMGDKALGVIEVKAATGDWYDYDAKYAPGGSVHVLPAELKPNVYQRVQELSLTAHQALGCRGVSRADLRYDDTPGGTGLLVVLEVNTQPGMTQTSLVPEMAAHAGLSFGELVRWMVEDASLNR.

In terms of domain architecture, ATP-grasp spans Lys101–Glu301. Pro127–Thr182 is a binding site for ATP. 3 residues coordinate Mg(2+): Asp251, Glu268, and Asn270.

This sequence belongs to the D-alanine--D-alanine ligase family. Mg(2+) serves as cofactor. The cofactor is Mn(2+).

It is found in the cytoplasm. The enzyme catalyses 2 D-alanine + ATP = D-alanyl-D-alanine + ADP + phosphate + H(+). It functions in the pathway cell wall biogenesis; peptidoglycan biosynthesis. Functionally, cell wall formation. This is D-alanine--D-alanine ligase from Methylobacterium radiotolerans (strain ATCC 27329 / DSM 1819 / JCM 2831 / NBRC 15690 / NCIMB 10815 / 0-1).